We begin with the raw amino-acid sequence, 101 residues long: Large ribosomal subunit protein bL27 (101 aa).

The propeptide occupies 1 to 9; the sequence is MLLMNLQLF.

This sequence belongs to the bacterial ribosomal protein bL27 family. Post-translationally, the N-terminus is cleaved by ribosomal processing cysteine protease Prp.

This is Large ribosomal subunit protein bL27 from Clostridium tetani (strain Massachusetts / E88).